Consider the following 316-residue polypeptide: Methionyl-tRNA formyltransferase (316 aa).

(6S)-5,6,7,8-tetrahydrofolate is bound at residue 109–112 (SLLP).

It belongs to the Fmt family.

The catalysed reaction is L-methionyl-tRNA(fMet) + (6R)-10-formyltetrahydrofolate = N-formyl-L-methionyl-tRNA(fMet) + (6S)-5,6,7,8-tetrahydrofolate + H(+). Its function is as follows. Attaches a formyl group to the free amino group of methionyl-tRNA(fMet). The formyl group appears to play a dual role in the initiator identity of N-formylmethionyl-tRNA by promoting its recognition by IF2 and preventing the misappropriation of this tRNA by the elongation apparatus. The protein is Methionyl-tRNA formyltransferase of Idiomarina loihiensis (strain ATCC BAA-735 / DSM 15497 / L2-TR).